Reading from the N-terminus, the 83-residue chain is Exodeoxyribonuclease 7 small subunit (83 aa).

This sequence belongs to the XseB family. Heterooligomer composed of large and small subunits.

The protein localises to the cytoplasm. It catalyses the reaction Exonucleolytic cleavage in either 5'- to 3'- or 3'- to 5'-direction to yield nucleoside 5'-phosphates.. Functionally, bidirectionally degrades single-stranded DNA into large acid-insoluble oligonucleotides, which are then degraded further into small acid-soluble oligonucleotides. This chain is Exodeoxyribonuclease 7 small subunit, found in Sinorhizobium medicae (strain WSM419) (Ensifer medicae).